The primary structure comprises 117 residues: Small ribosomal subunit protein eS25 (117 aa).

Residues 1 to 38 form a disordered region; that stretch reads MPPKKDAKSSAKQPQKTQKKKEGSGGGKAKKKKWSKGK. Basic residues predominate over residues 28–37; the sequence is KAKKKKWSKG.

The protein belongs to the eukaryotic ribosomal protein eS25 family.

The polypeptide is Small ribosomal subunit protein eS25 (RpS25) (Drosophila melanogaster (Fruit fly)).